The following is a 205-amino-acid chain: Probable GTP-binding protein EngB (205 aa).

An EngB-type G domain is found at 27 to 201; that stretch reads TGIEIAFAGR…AVKLDFWFSP (175 aa). Residues 35 to 42, 62 to 66, 80 to 83, 147 to 150, and 180 to 182 contribute to the GTP site; these read GRSNAGKS, GRTQL, DLPG, TKAD, and FSA. Mg(2+) is bound by residues S42 and T64.

It belongs to the TRAFAC class TrmE-Era-EngA-EngB-Septin-like GTPase superfamily. EngB GTPase family. Mg(2+) is required as a cofactor.

In terms of biological role, necessary for normal cell division and for the maintenance of normal septation. This chain is Probable GTP-binding protein EngB, found in Haemophilus influenzae (strain PittGG).